The sequence spans 320 residues: Aspartate carbamoyltransferase catalytic subunit (320 aa).

Carbamoyl phosphate-binding residues include R57 and T58. K85 provides a ligand contact to L-aspartate. The carbamoyl phosphate site is built by R107, H141, and Q144. Residues R174 and R228 each coordinate L-aspartate. Residues G269 and P270 each contribute to the carbamoyl phosphate site.

It belongs to the aspartate/ornithine carbamoyltransferase superfamily. ATCase family. In terms of assembly, heterododecamer (2C3:3R2) of six catalytic PyrB chains organized as two trimers (C3), and six regulatory PyrI chains organized as three dimers (R2).

The catalysed reaction is carbamoyl phosphate + L-aspartate = N-carbamoyl-L-aspartate + phosphate + H(+). The protein operates within pyrimidine metabolism; UMP biosynthesis via de novo pathway; (S)-dihydroorotate from bicarbonate: step 2/3. Catalyzes the condensation of carbamoyl phosphate and aspartate to form carbamoyl aspartate and inorganic phosphate, the committed step in the de novo pyrimidine nucleotide biosynthesis pathway. The protein is Aspartate carbamoyltransferase catalytic subunit of Mycobacterium ulcerans (strain Agy99).